The following is a 203-amino-acid chain: V-type ATP synthase subunit D (203 aa).

Belongs to the V-ATPase D subunit family.

In terms of biological role, produces ATP from ADP in the presence of a proton gradient across the membrane. This Chlamydia trachomatis serovar L2 (strain ATCC VR-902B / DSM 19102 / 434/Bu) protein is V-type ATP synthase subunit D.